The primary structure comprises 354 residues: Serum paraoxonase/arylesterase 2 (354 aa).

An intrachain disulfide couples cysteine 42 to cysteine 352. Residues glutamate 53 and aspartate 54 each coordinate Ca(2+). Histidine 114 acts as the Proton acceptor in catalysis. Isoleucine 116, asparagine 167, aspartate 168, and asparagine 223 together coordinate Ca(2+). The N-linked (GlcNAc...) asparagine glycan is linked to asparagine 254. Residues aspartate 268 and asparagine 269 each contribute to the Ca(2+) site. 2 N-linked (GlcNAc...) asparagine glycosylation sites follow: asparagine 269 and asparagine 323.

Belongs to the paraoxonase family. As to quaternary structure, homotrimer. The cofactor is Ca(2+). Post-translationally, glycosylated. The signal sequence is not cleaved.

It localises to the membrane. It carries out the reaction a phenyl acetate + H2O = a phenol + acetate + H(+). It catalyses the reaction an N-acyl-L-homoserine lactone + H2O = an N-acyl-L-homoserine + H(+). Its function is as follows. Capable of hydrolyzing lactones and a number of aromatic carboxylic acid esters. The sequence is that of Serum paraoxonase/arylesterase 2 (Pon2) from Rattus norvegicus (Rat).